Here is a 214-residue protein sequence, read N- to C-terminus: Pyridoxine/pyridoxamine 5'-phosphate oxidase (214 aa).

Residues 8-11 and Arg66 each bind substrate; that span reads RLSY. Residues 61 to 66, 76 to 77, Lys83, and Gln105 contribute to the FMN site; these read RTVLLR and FT. Positions 123, 127, and 131 each coordinate substrate. Residues 126 to 146 form a disordered region; that stretch reads SRPRESQLAAHASDPQSAPVS. FMN contacts are provided by residues 141-142 and Trp187; that span reads QS. 193-195 provides a ligand contact to substrate; sequence RMH. Residue Arg197 coordinates FMN.

It belongs to the pyridoxamine 5'-phosphate oxidase family. In terms of assembly, homodimer. Requires FMN as cofactor.

It catalyses the reaction pyridoxamine 5'-phosphate + O2 + H2O = pyridoxal 5'-phosphate + H2O2 + NH4(+). The enzyme catalyses pyridoxine 5'-phosphate + O2 = pyridoxal 5'-phosphate + H2O2. The protein operates within cofactor metabolism; pyridoxal 5'-phosphate salvage; pyridoxal 5'-phosphate from pyridoxamine 5'-phosphate: step 1/1. It functions in the pathway cofactor metabolism; pyridoxal 5'-phosphate salvage; pyridoxal 5'-phosphate from pyridoxine 5'-phosphate: step 1/1. Its function is as follows. Catalyzes the oxidation of either pyridoxine 5'-phosphate (PNP) or pyridoxamine 5'-phosphate (PMP) into pyridoxal 5'-phosphate (PLP). The protein is Pyridoxine/pyridoxamine 5'-phosphate oxidase of Deinococcus deserti (strain DSM 17065 / CIP 109153 / LMG 22923 / VCD115).